Consider the following 1232-residue polypeptide: Chromosome-associated kinesin KIF4A (1232 aa).

One can recognise a Kinesin motor domain in the interval 9–336 (PVRVALRCRP…LRYADRARKI (328 aa)). 88–95 (GQTGSGKT) contributes to the ATP binding site. Positions 350-999 (ELNHLKQQVQ…IKQKLTLLQV (650 aa)) form a coiled coil. S394 bears the Phosphoserine mark. A disordered region spans residues 496–515 (AQVETSPETSRSSDAFTTQH). Residues 497 to 515 (QVETSPETSRSSDAFTTQH) are compositionally biased toward polar residues. Residues 663-1232 (QWKQKKDKEV…GCSPIEEEAH (570 aa)) are required for the interaction with PRC1. The short motif at 793 to 798 (PKLRRR) is the Nuclear localization signal element. T799 bears the Phosphothreonine mark. S801, S810, S815, and S951 each carry phosphoserine. At T995 the chain carries Phosphothreonine. A globular region spans residues 1000-1232 (ASRQKHLPKD…GCSPIEEEAH (233 aa)). A phosphoserine mark is found at S1001, S1013, S1017, S1028, and S1126. Residues 1086-1144 (CSCKGWCGNKQCGCRKQKSDCGVDCCCDPTKCRNRQQGKDSLGTVERTQDSEGSFKLED) form a CRD; required for [4Fe-4S] cluster binding and localization to the spindle midzone and midbody during anaphase and telophase region. Positions 1122–1142 (QGKDSLGTVERTQDSEGSFKL) are disordered. The segment covering 1132-1142 (RTQDSEGSFKL) has biased composition (basic and acidic residues). T1181 is subject to Phosphothreonine. S1186 is subject to Phosphoserine. Residue K1194 forms a Glycyl lysine isopeptide (Lys-Gly) (interchain with G-Cter in SUMO2) linkage. S1225 is subject to Phosphoserine.

Belongs to the TRAFAC class myosin-kinesin ATPase superfamily. Kinesin family. Chromokinesin subfamily. As to quaternary structure, interacts with the cytosolic iron-sulfur protein assembly (CIA) complex components CIAO2B and MMS19; the interactions facilitate the transfer of Fe-S clusters to KIF4A to ensure proper localization of KIF4A to mitotic machinery components. Interacts (via C-terminus) with unphosphorylated PRC1 (via N-terminus); the interaction is required for the progression of mitosis. [2Fe-2S] cluster is required as a cofactor. Requires [4Fe-4S] cluster as cofactor. As to expression, highly expressed in hematopoietic tissues, fetal liver, spleen, thymus and adult thymus and bone marrow. Lower levels are found in heart, testis, kidney, colon and lung.

The protein localises to the nucleus matrix. The protein resides in the cytoplasm. Its subcellular location is the cytoskeleton. It is found in the spindle. It localises to the midbody. The protein localises to the chromosome. Its function is as follows. Iron-sulfur (Fe-S) cluster binding motor protein that has a role in chromosome segregation during mitosis. Translocates PRC1 to the plus ends of interdigitating spindle microtubules during the metaphase to anaphase transition, an essential step for the formation of an organized central spindle midzone and midbody and for successful cytokinesis. May play a role in mitotic chromosomal positioning and bipolar spindle stabilization. The polypeptide is Chromosome-associated kinesin KIF4A (KIF4A) (Homo sapiens (Human)).